The sequence spans 194 residues: Inner membrane-spanning protein YciB (194 aa).

The next 5 membrane-spanning stretches (helical) occupy residues 1–21, 49–69, 77–97, 120–140, and 150–170; these read MKLLFDFFPIILFFVVYKTTN, EKMHLFALVIVVILGGATILF, WKPSVVCWLLAVVFLIGGWVS, LNYSWVIFNTLLGALNLYVAY, and FKLFGMLGLSLVFALMQGVYI.

It belongs to the YciB family.

It is found in the cell inner membrane. Functionally, plays a role in cell envelope biogenesis, maintenance of cell envelope integrity and membrane homeostasis. The polypeptide is Inner membrane-spanning protein YciB (Hahella chejuensis (strain KCTC 2396)).